The sequence spans 632 residues: Putative golgin subfamily A member 8I (632 aa).

The interval Met1–Ser77 is disordered. The segment covering Thr38–Gly50 has biased composition (polar residues). Coiled coils occupy residues Leu86–Arg154 and Lys209–Ala421. Positions Lys352–Lys362 are enriched in basic and acidic residues. 4 disordered regions span residues Lys352–Ser383, Pro423–Ser445, Leu496–Glu524, and Ala550–Ala569. Residues Leu508–Gly520 are compositionally biased toward gly residues. Positions Ala529–Arg632 are golgi-targeting domain. The segment covering Asp555–Gly568 has biased composition (low complexity).

This sequence belongs to the GOLGA8 family.

It localises to the golgi apparatus. Its subcellular location is the golgi stack membrane. Its function is as follows. May be involved in maintaining Golgi structure. This chain is Putative golgin subfamily A member 8I, found in Homo sapiens (Human).